Reading from the N-terminus, the 430-residue chain is C4-dicarboxylate transport protein (430 aa).

9 consecutive transmembrane segments (helical) span residues 8–28 (SLYF…HFYP), 44–64 (LIKM…IAGM), 76–96 (AALL…LVVV), 144–164 (AFAS…GFAL), 184–204 (VIFG…FGAM), 222–242 (LILC…GSIA), 289–309 (VVGL…SIYL), 326–346 (IWHQ…AAGV), and 352–372 (IVLA…LALI).

Belongs to the dicarboxylate/amino acid:cation symporter (DAACS) (TC 2.A.23) family.

It localises to the cell inner membrane. Its function is as follows. Responsible for the transport of dicarboxylates such as succinate, fumarate, and malate from the periplasm across the membrane. This is C4-dicarboxylate transport protein from Pectobacterium atrosepticum (strain SCRI 1043 / ATCC BAA-672) (Erwinia carotovora subsp. atroseptica).